Here is a 332-residue protein sequence, read N- to C-terminus: MARILDNDVMGNEEFSDRTLRPQYLHEYIGQDKVKEQFAIFIEAAKRRDESLDHVLLFGPPGLGKTTMAFVIANELGVNLKQTSGPAVEKAGDLVAILNELEPGDILFIDEIHRMPMSVEEVLYSAMEDFYIDIMIGAGDTSRSIHLDLPPFTLIGATTRAGMLSNPLRARFGITGHMEYYQEKDLTEIVERTATIFEIKIDHEAARKLACRSRGTPRIANRLLKRVRDYAQIIGDGIITAQITDRALTMLDVDREGLDYIDQKILRTMIEMYQGGPVGLGTLSVNIAEERNTVEEMYEPYLIQKGFLMRTRTGRVATQKAYRHLGYPYQNT.

Residues 1–181 form a large ATPase domain (RuvB-L) region; that stretch reads MARILDNDVM…FGITGHMEYY (181 aa). Residues leucine 20, arginine 21, glycine 62, lysine 65, threonine 66, threonine 67, 128 to 130, arginine 171, tyrosine 181, and arginine 218 each bind ATP; that span reads EDF. Threonine 66 is a binding site for Mg(2+). The interval 182–252 is small ATPAse domain (RuvB-S); the sequence is QEKDLTEIVE…ITDRALTMLD (71 aa). Positions 255-332 are head domain (RuvB-H); the sequence is REGLDYIDQK…RHLGYPYQNT (78 aa). DNA is bound by residues arginine 291, arginine 310, arginine 312, and arginine 315.

Belongs to the RuvB family. In terms of assembly, homohexamer. Forms an RuvA(8)-RuvB(12)-Holliday junction (HJ) complex. HJ DNA is sandwiched between 2 RuvA tetramers; dsDNA enters through RuvA and exits via RuvB. An RuvB hexamer assembles on each DNA strand where it exits the tetramer. Each RuvB hexamer is contacted by two RuvA subunits (via domain III) on 2 adjacent RuvB subunits; this complex drives branch migration. In the full resolvosome a probable DNA-RuvA(4)-RuvB(12)-RuvC(2) complex forms which resolves the HJ.

It is found in the cytoplasm. It carries out the reaction ATP + H2O = ADP + phosphate + H(+). In terms of biological role, the RuvA-RuvB-RuvC complex processes Holliday junction (HJ) DNA during genetic recombination and DNA repair, while the RuvA-RuvB complex plays an important role in the rescue of blocked DNA replication forks via replication fork reversal (RFR). RuvA specifically binds to HJ cruciform DNA, conferring on it an open structure. The RuvB hexamer acts as an ATP-dependent pump, pulling dsDNA into and through the RuvAB complex. RuvB forms 2 homohexamers on either side of HJ DNA bound by 1 or 2 RuvA tetramers; 4 subunits per hexamer contact DNA at a time. Coordinated motions by a converter formed by DNA-disengaged RuvB subunits stimulates ATP hydrolysis and nucleotide exchange. Immobilization of the converter enables RuvB to convert the ATP-contained energy into a lever motion, pulling 2 nucleotides of DNA out of the RuvA tetramer per ATP hydrolyzed, thus driving DNA branch migration. The RuvB motors rotate together with the DNA substrate, which together with the progressing nucleotide cycle form the mechanistic basis for DNA recombination by continuous HJ branch migration. Branch migration allows RuvC to scan DNA until it finds its consensus sequence, where it cleaves and resolves cruciform DNA. The protein is Holliday junction branch migration complex subunit RuvB of Streptococcus pyogenes serotype M3 (strain ATCC BAA-595 / MGAS315).